A 478-amino-acid chain; its full sequence is Ubiquitin carboxyl-terminal hydrolase calypso (478 aa).

In terms of domain architecture, UCH catalytic spans 11–239; sequence GWLELESDPG…IRFNLMAVVP (229 aa). Cys97 serves as the catalytic Nucleophile. Residue His176 is the Proton donor of the active site. Positions 400–428 constitute a ULD domain; sequence NYDEFICTFLSMLAHQGELGDLVSQHLIT. Residues 430-478 are positively charged C-terminal tail required for binding nucleosomes; sequence RKPNMGSVQNSGSRGVVRNYNKKTTTNGSSPKTPSSKRRRGRTKYRKRK. Polar residues predominate over residues 432-442; the sequence is PNMGSVQNSGS. The interval 432 to 478 is disordered; the sequence is PNMGSVQNSGSRGVVRNYNKKTTTNGSSPKTPSSKRRRGRTKYRKRK. Basic residues predominate over residues 464-478; sequence SSKRRRGRTKYRKRK.

This sequence belongs to the peptidase C12 family. BAP1 subfamily. As to quaternary structure, catalytic component of the polycomb repressive deubiquitinase (PR-DUB) complex, at least composed of caly/calypso, Asx and sba (MBD5/6 homolog). The PR-DUB complex associates with nucleosomes to mediate deubiquitination of histone H2AK118ub1 substrates; the association requires the positively charged C-terminal tail of caly, probably due to direct binding of DNA. Interacts (via ULD domain) with Asx (via DEUBAD domain); the interaction produces a stable heterodimer with a composite binding site for ubiquitin. Homodimerizes (via coiled-coil hinge-region between the UCH and ULD domains) to mediate assembly of 2 copies of the caly-Asx heterodimer into a bisymmetric tetramer; dimerization enhances PR-DUB association with nucleosomes.

The protein localises to the nucleus. It carries out the reaction Thiol-dependent hydrolysis of ester, thioester, amide, peptide and isopeptide bonds formed by the C-terminal Gly of ubiquitin (a 76-residue protein attached to proteins as an intracellular targeting signal).. Its function is as follows. Catalytic component of the polycomb repressive deubiquitinase (PR-DUB) complex, a complex that specifically mediates deubiquitination of histone H2A monoubiquitinated at 'Lys-119' (H2AK118ub1). Mediates bisymmetric organization of the PR-DUB complex and is involved in association with nucleosomes to mediate deubiquitination. Does not deubiquitinate monoubiquitinated histone H2B. Required to maintain the transcriptionally repressive state of homeotic genes throughout development. The PR-DUB complex has weak or no activity toward 'Lys-48'- and 'Lys-63'-linked polyubiquitin chains. Polycomb group (PcG) protein. The sequence is that of Ubiquitin carboxyl-terminal hydrolase calypso from Aedes aegypti (Yellowfever mosquito).